Consider the following 254-residue polypeptide: uncharacterized protein (254 aa).

NADP(+)-binding residues include Ile18, Ser37, Asp63, Asn90, Tyr159, Lys163, Val192, and Thr194. Tyr159 (proton donor) is an active-site residue. The Lowers pKa of active site Tyr role is filled by Lys163.

Belongs to the short-chain dehydrogenases/reductases (SDR) family.

The protein localises to the cytoplasm. The protein resides in the nucleus. This is an uncharacterized protein from Schizosaccharomyces pombe (strain 972 / ATCC 24843) (Fission yeast).